The following is a 568-amino-acid chain: MSHRSDTLPVPSGQRRGRVPRDHSIYTQLLEITLHLQQAMTEHFVQLTSRQGLSLEERRHTEAICEHEALLSRLICRMINLLQSGAASGLELQVPLPSEDSRGDVRYGQRAQLSGQPDPVPQLSDCEAAFVNRDLSIRGIDISVFYQSSFQDYNAYQKDKYHKDKNTLGFINLGTSENKLCMDLMTERLQESDMNCIEDTLLQYPDWRGQPFLREEVARFLTYYCRAPTRLDPENVVVLNGCCSVFCALAMVLCDPGEAFLVPAPFYGGFAFSSRLYAKVELIPVHLESEVTVTNTHPFQLTVDKLEEALLEARLEGKKVRGLVLINPQNPLGDIYSPDSLMKYLEFAKRYNLHVIIDEIYMLSVFDESITFHSILSMKSLPDSNRTHVIWGTSKDFGISGFRFGALYTHNKEVASAVSAFGYLHSISGITQHKLCQLLQNTEWIDKVYLPTNCYRLREAHKYITAELKALEIPFHNRSSGLYVWINLKKYLDPCTFEEERLLYCRFLDNKLLLSRGKTYMCKEPGWFCLIFADELPRLKLAMRRFCDVLQEQKEALIVKQLEDAMRE.

Positions 1–21 (MSHRSDTLPVPSGQRRGRVPR) are disordered. Residue K395 is modified to N6-(pyridoxal phosphate)lysine.

The protein belongs to the class-I pyridoxal-phosphate-dependent aminotransferase family.

The sequence is that of Probable inactive 1-aminocyclopropane-1-carboxylate synthase-like protein 2 (ACCSL) from Homo sapiens (Human).